The following is a 664-amino-acid chain: Phosphomethylpyrimidine synthase (664 aa).

Residues asparagine 235, methionine 264, tyrosine 293, histidine 329, 349–351 (SRG), 390–393 (DGMR), and glutamate 429 contribute to the substrate site. Position 433 (histidine 433) interacts with Zn(2+). Tyrosine 456 serves as a coordination point for substrate. Zn(2+) is bound at residue histidine 497. The [4Fe-4S] cluster site is built by cysteine 577, cysteine 580, and cysteine 585.

Belongs to the ThiC family. As to quaternary structure, homodimer. [4Fe-4S] cluster is required as a cofactor.

The catalysed reaction is 5-amino-1-(5-phospho-beta-D-ribosyl)imidazole + S-adenosyl-L-methionine = 4-amino-2-methyl-5-(phosphooxymethyl)pyrimidine + CO + 5'-deoxyadenosine + formate + L-methionine + 3 H(+). The protein operates within cofactor biosynthesis; thiamine diphosphate biosynthesis. Catalyzes the synthesis of the hydroxymethylpyrimidine phosphate (HMP-P) moiety of thiamine from aminoimidazole ribotide (AIR) in a radical S-adenosyl-L-methionine (SAM)-dependent reaction. The chain is Phosphomethylpyrimidine synthase from Shewanella amazonensis (strain ATCC BAA-1098 / SB2B).